The following is a 159-amino-acid chain: Na(+)/H(+) antiporter subunit E1 (159 aa).

The next 4 membrane-spanning stretches (helical) occupy residues 1–21, 27–47, 49–69, and 101–121; these read MAIQ…LSGS, LLLG…ILPG, FYFI…VELL, and WQIV…VLGI.

Belongs to the CPA3 antiporters (TC 2.A.63) subunit E family. May form a heterooligomeric complex that consists of seven subunits: mnhA1, mnhB1, mnhC1, mnhD1, mnhE1, mnhF1 and mnhG1.

Its subcellular location is the cell membrane. In terms of biological role, mnh complex is a Na(+)/H(+) antiporter involved in Na(+) excretion. This Staphylococcus haemolyticus (strain JCSC1435) protein is Na(+)/H(+) antiporter subunit E1 (mnhE1).